A 248-amino-acid polypeptide reads, in one-letter code: Phosphoribosyl isomerase A (248 aa).

Aspartate 14 (proton acceptor) is an active-site residue. Residue aspartate 133 is the Proton donor of the active site.

This sequence belongs to the HisA/HisF family.

It is found in the cytoplasm. The enzyme catalyses 1-(5-phospho-beta-D-ribosyl)-5-[(5-phospho-beta-D-ribosylamino)methylideneamino]imidazole-4-carboxamide = 5-[(5-phospho-1-deoxy-D-ribulos-1-ylimino)methylamino]-1-(5-phospho-beta-D-ribosyl)imidazole-4-carboxamide. The catalysed reaction is N-(5-phospho-beta-D-ribosyl)anthranilate = 1-(2-carboxyphenylamino)-1-deoxy-D-ribulose 5-phosphate. It participates in amino-acid biosynthesis; L-histidine biosynthesis; L-histidine from 5-phospho-alpha-D-ribose 1-diphosphate: step 4/9. The protein operates within amino-acid biosynthesis; L-tryptophan biosynthesis; L-tryptophan from chorismate: step 3/5. Functionally, involved in both the histidine and tryptophan biosynthetic pathways. This is Phosphoribosyl isomerase A from Mycobacterium sp. (strain JLS).